Here is a 194-residue protein sequence, read N- to C-terminus: Granulocyte colony-stimulating factor (194 aa).

A signal peptide spans 1 to 20; it reads KLMALQLLLWHSALWMVQEA. Disulfide bonds link cysteine 56–cysteine 62 and cysteine 84–cysteine 94. The O-linked (GalNAc...) threonine glycan is linked to threonine 153.

The protein belongs to the IL-6 superfamily. As to quaternary structure, monomer. O-glycosylated.

It localises to the secreted. Functionally, granulocyte/macrophage colony-stimulating factors are cytokines that act in hematopoiesis by controlling the production, differentiation, and function of 2 related white cell populations of the blood, the granulocytes and the monocytes-macrophages. This CSF induces granulocytes. The protein is Granulocyte colony-stimulating factor (CSF3) of Felis catus (Cat).